Here is a 543-residue protein sequence, read N- to C-terminus: Tetrahydroberberine oxidase (543 aa).

An N-terminal signal peptide occupies residues 1–26 (MIPNSSSSSILSLLVLLLFSTSSSWA). A disulfide bond links Cys37 and Cys97. N-linked (GlcNAc...) asparagine glycosylation is found at Asn54, Asn74, Asn135, Asn142, Asn162, Asn295, Asn335, Asn440, and Asn482. The FAD-binding PCMH-type domain maps to 75-250 (STQKPEFIIT…LSWKVKLVPV (176 aa)). Residues 112–175 (HDVEGLSYVS…NTLGFPAGFC (64 aa)) constitute a cross-link (6-(S-cysteinyl)-8alpha-(pros-histidyl)-FAD (His-Cys)).

Belongs to the oxygen-dependent FAD-linked oxidoreductase family. FAD serves as cofactor. Post-translationally, the FAD cofactor is bound via a bicovalent 6-S-cysteinyl, 8alpha-N1-histidyl FAD linkage.

It carries out the reaction (S)-canadine + 2 O2 + H(+) = berberine + 2 H2O2. Its function is as follows. Catalyzes the oxidation of different tetrahydroprotoberberines, such as (S)-canadine, (S)-scoulerine and (S)-tetrahydropalmatine. In Argemone mexicana (Mexican prickly poppy), this protein is Tetrahydroberberine oxidase.